The chain runs to 349 residues: Probable inactive tRNA-specific adenosine deaminase-like protein 3 (349 aa).

Met1 carries the N-acetylmethionine modification. The disordered stretch occupies residues 1–25 (MEPTSGFAEQPGPEKVESEEQEPAQ). Residues 171-334 (AAMQTHMERA…PDLNHRFQVF (164 aa)) enclose the CMP/dCMP-type deaminase domain. Zn(2+) is bound by residues His223, Cys289, and Cys292.

It belongs to the cytidine and deoxycytidylate deaminase family. ADAT3 subfamily. It depends on Zn(2+) as a cofactor.

This chain is Probable inactive tRNA-specific adenosine deaminase-like protein 3 (Adat3), found in Rattus norvegicus (Rat).